A 252-amino-acid polypeptide reads, in one-letter code: MAMTPQLAFSRMPPGFRFQPTDEQLVVDYLQRRTAAQPCVTPDITDIDVYNVDPWQLPAMAMYGSDHDRYFFTMAAREAQARRTTPSGFWKPTGTKKTIFVVAGGHEVPTAVKRRFVFYLGHHQPSGSSNNNKTSWIMHEYRLMNSPRAAVPSSSSVNRLPTDDLTEEMVLCRISNKDLPKPPFIHNGLLQFSSVGLNGDGYNYLILDHLEPPAMEYPNVDIGNVDDAAAADDDPGDLDEEIDDSMQRNHGG.

The NAC domain maps to Met-12–Lys-177. The DNA-binding element occupies Thr-110–Pro-183. The interval Val-225–Gly-252 is disordered. Residues Ala-229 to Asp-244 show a composition bias toward acidic residues.

In terms of assembly, forms heterodimers with NAC26. Expressed in stems and panicles. Expressed in developing seeds.

The protein resides in the nucleus. The protein localises to the cytoplasm. In terms of biological role, transcription factor involved in the regulation of seed size. Possesses transactivation activity in yeast. The chain is NAC domain-containing protein 23 from Oryza sativa subsp. indica (Rice).